The sequence spans 130 residues: MKKKHKRLLITSGIFCFLSCAVFFILTTLKENISFFYTVSEAIVLPNGQKLIRVGGMVVENSVIRNESEVIFQMTDFNKSVMVKYQGILPPMFSEKSGVVVQGKMFDNSTFLADTVFAKHDENYMPKVLK.

Residues 1–7 lie on the Cytoplasmic side of the membrane; the sequence is MKKKHKR. Residues 8–28 traverse the membrane as a helical; Signal-anchor for type II membrane protein segment; sequence LLITSGIFCFLSCAVFFILTT. At 29–130 the chain is on the extracellular side; sequence LKENISFFYT…DENYMPKVLK (102 aa). Heme-binding residues include histidine 120 and tyrosine 124.

This sequence belongs to the CcmE/CycJ family.

The protein resides in the cell membrane. Its function is as follows. Heme chaperone required for the biogenesis of c-type cytochromes. Transiently binds heme delivered by CcmC and transfers the heme to apo-cytochromes in a process facilitated by CcmF and CcmH. The chain is Cytochrome c-type biogenesis protein CcmE from Wolbachia pipientis wMel.